The following is a 152-amino-acid chain: Interleukin-1 family member 10 (152 aa).

This sequence belongs to the IL-1 family. In terms of assembly, interacts with cargo receptor TMED10; the interaction mediates the translocation from the cytoplasm into the ERGIC (endoplasmic reticulum-Golgi intermediate compartment) and thereby secretion.

The protein resides in the cytoplasm. Its subcellular location is the endoplasmic reticulum-Golgi intermediate compartment. The protein localises to the secreted. Functionally, cytokine with immunomodulatory activity. Alone, does not induce cytokine production, but reduces IL22 and IL17A production by T-cells in response to heat-killed Candida albicans. Reduces IL36G-induced production of IL8 by peripheral blood mononuclear cells. Increases IL6 production by dendritic cells stimulated by bacterial lipopolysaccharides (LPS). Ligand for IL-36R/IL1RL2. This is Interleukin-1 family member 10 (Il1f10) from Mus musculus (Mouse).